A 310-amino-acid polypeptide reads, in one-letter code: Homoserine kinase (310 aa).

Residue 91–101 (PIGSGLGSSAC) participates in ATP binding.

The protein belongs to the GHMP kinase family. Homoserine kinase subfamily.

The protein resides in the cytoplasm. It catalyses the reaction L-homoserine + ATP = O-phospho-L-homoserine + ADP + H(+). The protein operates within amino-acid biosynthesis; L-threonine biosynthesis; L-threonine from L-aspartate: step 4/5. Functionally, catalyzes the ATP-dependent phosphorylation of L-homoserine to L-homoserine phosphate. This is Homoserine kinase from Escherichia coli (strain K12 / MC4100 / BW2952).